Here is a 117-residue protein sequence, read N- to C-terminus: Large ribosomal subunit protein bL20 (117 aa).

This sequence belongs to the bacterial ribosomal protein bL20 family.

Functionally, binds directly to 23S ribosomal RNA and is necessary for the in vitro assembly process of the 50S ribosomal subunit. It is not involved in the protein synthesizing functions of that subunit. This is Large ribosomal subunit protein bL20 from Rickettsia akari (strain Hartford).